Consider the following 418-residue polypeptide: Serine hydroxymethyltransferase (418 aa).

(6S)-5,6,7,8-tetrahydrofolate-binding positions include Leu121 and 125–127; that span reads GHL. The residue at position 230 (Lys230) is an N6-(pyridoxal phosphate)lysine. A (6S)-5,6,7,8-tetrahydrofolate-binding site is contributed by 356–358; the sequence is SPF.

It belongs to the SHMT family. In terms of assembly, homodimer. Requires pyridoxal 5'-phosphate as cofactor.

It is found in the cytoplasm. It catalyses the reaction (6R)-5,10-methylene-5,6,7,8-tetrahydrofolate + glycine + H2O = (6S)-5,6,7,8-tetrahydrofolate + L-serine. Its pathway is one-carbon metabolism; tetrahydrofolate interconversion. It participates in amino-acid biosynthesis; glycine biosynthesis; glycine from L-serine: step 1/1. Its function is as follows. Catalyzes the reversible interconversion of serine and glycine with tetrahydrofolate (THF) serving as the one-carbon carrier. This reaction serves as the major source of one-carbon groups required for the biosynthesis of purines, thymidylate, methionine, and other important biomolecules. Also exhibits THF-independent aldolase activity toward beta-hydroxyamino acids, producing glycine and aldehydes, via a retro-aldol mechanism. This chain is Serine hydroxymethyltransferase, found in Pseudoalteromonas atlantica (strain T6c / ATCC BAA-1087).